Here is a 97-residue protein sequence, read N- to C-terminus: Mitochondrial import inner membrane translocase subunit Tim8 A (97 aa).

The Twin CX3C motif signature appears at Cys-43–Cys-66. 2 cysteine pairs are disulfide-bonded: Cys-43/Cys-66 and Cys-47/Cys-62. Residues Ser-57, Ser-87, Ser-94, and Ser-96 each carry the phosphoserine modification.

The protein belongs to the small Tim family. As to quaternary structure, heterohexamer; composed of 3 copies of TIMM8A and 3 copies of TIMM13, named soluble 70 kDa complex. Associates with the TIM22 complex, whose core is composed of TIMM22.

It is found in the mitochondrion inner membrane. Functionally, mitochondrial intermembrane chaperone that participates in the import and insertion of some multi-pass transmembrane proteins into the mitochondrial inner membrane. Also required for the transfer of beta-barrel precursors from the TOM complex to the sorting and assembly machinery (SAM complex) of the outer membrane. Acts as a chaperone-like protein that protects the hydrophobic precursors from aggregation and guide them through the mitochondrial intermembrane space. The TIMM8-TIMM13 complex mediates the import of proteins such as TIMM23, SLC25A12/ARALAR1 and SLC25A13/ARALAR2, while the predominant TIMM9-TIMM10 70 kDa complex mediates the import of much more proteins. This Bos taurus (Bovine) protein is Mitochondrial import inner membrane translocase subunit Tim8 A (TIMM8A).